The primary structure comprises 604 residues: ERAD-associated E3 ubiquitin-protein ligase component HRD3B (604 aa).

A signal peptide spans 1–25; it reads MRVSGQSIIAISLFTLSLYIHRVQA. The tract at residues 48 to 69 is disordered; the sequence is ESSDFDEFGESEPKSEEELDPG. N-linked (GlcNAc...) asparagine glycosylation is found at Asn78 and Asn105. Sel1-like repeat units lie at residues 125–160, 244–274, 279–307, 311–344, 346–380, 464–492, and 498–528; these read PHAQSVMGFVYGIGMMRETSRSKSILHHHFAAAGGN, VAMHKIGLFYYFGLRGLRRDHAKALYWFSKA, LGYLYVKGYGVDKRNYTKAREYFEMAANN, SGHYNLGVLYLKGTGVKKDVRHATKYFFVAANAG, PKAFYQLAKMFHTGVGLTKNLEMATTFYKLVAERG, AALLIGDAYYYGRGTERDFVRAAEAYMYA, and AQAMFNLGYMHEHGEGLPFDLHLAKRYYDQA. N-linked (GlcNAc...) asparagine glycosylation is present at Asn293.

It belongs to the sel-1 family.

In terms of biological role, may be involved in the endoplasmic reticulum (ER) quality control system called ER-associated degradation (ERAD). This is ERAD-associated E3 ubiquitin-protein ligase component HRD3B from Arabidopsis thaliana (Mouse-ear cress).